The following is a 475-amino-acid chain: F-box protein SKIP22 (475 aa).

The interval 114–133 (DQAKSNPNTSVEDPEGDISG) is disordered. The 47-residue stretch at 319–365 (PPCLMRLPTELKLKILELLPGVSIGNMACVCTEMRYLASDNDLWKQK) folds into the F-box domain.

In terms of assembly, part of a SCF (ASK-cullin-F-box) protein ligase complex. Interacts with SKP1A/ASK1 and SPK1B/ASK2.

The protein localises to the nucleus. Its pathway is protein modification; protein ubiquitination. In terms of biological role, component of SCF(ASK-cullin-F-box) E3 ubiquitin ligase complexes, which may mediate the ubiquitination and subsequent proteasomal degradation of target proteins. The polypeptide is F-box protein SKIP22 (SKIP22) (Arabidopsis thaliana (Mouse-ear cress)).